Reading from the N-terminus, the 326-residue chain is Biotin synthase (326 aa).

The Radical SAM core domain occupies 51–278 (NRVQVSRLIS…KSFVRLSAGR (228 aa)). [4Fe-4S] cluster is bound by residues C66, C70, and C73. The [2Fe-2S] cluster site is built by C110, C141, C201, and R273.

The protein belongs to the radical SAM superfamily. Biotin synthase family. In terms of assembly, homodimer. The cofactor is [4Fe-4S] cluster. It depends on [2Fe-2S] cluster as a cofactor.

The catalysed reaction is (4R,5S)-dethiobiotin + (sulfur carrier)-SH + 2 reduced [2Fe-2S]-[ferredoxin] + 2 S-adenosyl-L-methionine = (sulfur carrier)-H + biotin + 2 5'-deoxyadenosine + 2 L-methionine + 2 oxidized [2Fe-2S]-[ferredoxin]. It participates in cofactor biosynthesis; biotin biosynthesis; biotin from 7,8-diaminononanoate: step 2/2. Its function is as follows. Catalyzes the conversion of dethiobiotin (DTB) to biotin by the insertion of a sulfur atom into dethiobiotin via a radical-based mechanism. In Paramagnetospirillum magneticum (strain ATCC 700264 / AMB-1) (Magnetospirillum magneticum), this protein is Biotin synthase.